A 46-amino-acid polypeptide reads, in one-letter code: Sperm protamine P1 (46 aa).

It belongs to the protamine P1 family. In terms of tissue distribution, testis.

The protein localises to the nucleus. It localises to the chromosome. Its function is as follows. Protamines substitute for histones in the chromatin of sperm during the haploid phase of spermatogenesis. They compact sperm DNA into a highly condensed, stable and inactive complex. This Glauconycteris beatrix (Beatrix's bat) protein is Sperm protamine P1 (PRM1).